The following is a 132-amino-acid chain: Fatty acid-binding protein, adipocyte (132 aa).

An N-acetylcysteine modification is found at Cys-2. Phosphoserine is present on Ser-13. Tyr-20 carries the phosphotyrosine; by Tyr-kinases modification. The Nuclear localization signal motif lies at 22-32; sequence KEVGVGFATRK. 127–129 serves as a coordination point for a fatty acid; that stretch reads RVY.

Belongs to the calycin superfamily. Fatty-acid binding protein (FABP) family. Monomer. Homodimer. Interacts with PPARG.

It is found in the cytoplasm. It localises to the nucleus. Functionally, lipid transport protein in adipocytes. Binds both long chain fatty acids and retinoic acid. Delivers long-chain fatty acids and retinoic acid to their cognate receptors in the nucleus. This is Fatty acid-binding protein, adipocyte (FABP4) from Cervus elaphus (Red deer).